Here is a 1317-residue protein sequence, read N- to C-terminus: MMLRTFTLLLLCIWLNPGMTSLAVESQPELWIESNYPQAPWENITLWCKSPSRVSSKFLLLKDNSQMTWIRPPYKTFQVSFFIGALTESNTGLYRCCYWKEKGWSKPSKILELEAPGQLPKPIFWIQAETPPLPGCNVNIFCHGWLQDLVFMLFKEGYTEPVDYQVPTGTMAIFSIDNLAPENEGVYICRTHIQMLPTLWSEPSNPLKLVVAGLYPKPTLTAHPGPILAPGESLSLRCQGPIYGMTFALMRLEDLKKSFYHKKPIKNEAYFYFQDLKIQDTGHYLCFYYDGSYRGSLLSDILKIWVTDTFPKTWLLVQPSPVIQMGQNVSLRCGGLMDGVGLALYKKGEEKPLQFLDASSNTGNNSFFLKNVTYRDAGIYSCHYYLTWKTSIKMATYNTVELMVVAWPSSVFKVGKTITLQCRVSHPVLEFSLEWEERTTFQKFSVDGDFLITDIEGQGTGTYSCSYRIEAHPNTWSHRSKPLKLVGPAGFLTWNSILNEAVRVSLTMQLASLLLLVVWIRWKCRRLRLREAWLLGTAQGVAMLFILMALLCCGLCNGALTEEIEIVMPTPKPELWAETNFPLAPWKNLTLWCRSPSGSTKEFVLLKDGTGWIATRPASEQVRAAFPLGALTHSHTGSYHCHSWEEMAVSEPSEALELVGTDILPKPVISASLPIRGQELQIRCKGWLEGLGFALYKKGEQEPVQQLGAVGREAFFTIQRMEDKDEGNYSCRTHTEMQPFKWSEPSEPLELVIKEMYPKPFFKTWASPVVTPGSRVTFNCSTSHEHMSFILYKDGNEIASSDLAWGNPGGSTAHFLIISVGIGDGGNYSCRYYDFSIWSEPSNPVELVVTEFYPKPTLLAQPGPVVLPGKNVTLRCQGIFQGMRFALLQEGTHTPLQFQSTSGTSADFLLHTVGAQDFGNYSCVYYETTMSNRGSSLSTPLMIWVTDTFPRPWLSAEPSSVVTMGQNVTLWCQGPVRGVGYILHKEGEATSMQLWGSTSNEGAFPIINISGASIGRYSCCYHPDWMSPIKIQPSNTLELIVTGLLPKPSLLVQPGPMVAPGENVTLQCQGELPDSTFVLLKEGTRQPLEQQRPSGYRADFWMPVVRDQDSGVYSCVYYLDSAPLVASNHSNSLEIWVTDKPPKPSLSAWPSTIFKLGKDITLQCRGPLPGVEFVLEHDGEEAPQQFSEDGDFVIDNLEGKGIGNYSCSYRLQAYPDIWSEPSDTLELVGAAGPVAQECTVGNIVRSTLIVVVVVALGIVLAVEWKKWPRLRTRGSETDGRDQTVVLEECNQEGEPGTTTNSPSSASQEVSVELTVPI.

The first 20 residues, 1 to 20 (MMLRTFTLLLLCIWLNPGMT), serve as a signal peptide directing secretion. 5 Ig-like C2-type domains span residues 21 to 112 (SLAV…KILE), 114 to 211 (EAPG…KLVV), 216 to 302 (PKPT…SDIL), 311 to 398 (PKTW…ATYN), and 400 to 481 (VELM…HRSK). The Extracellular segment spans residues 21 to 499 (SLAVESQPEL…GFLTWNSILN (479 aa)). Asn-43 carries an N-linked (GlcNAc...) asparagine glycan. Cys-48 and Cys-96 are joined by a disulfide. A disulfide bridge links Cys-238 with Cys-286. Asn-328 and Asn-371 each carry an N-linked (GlcNAc...) asparagine glycan. Intrachain disulfides connect Cys-333–Cys-382 and Cys-422–Cys-465. Residues 500–520 (EAVRVSLTMQLASLLLLVVWI) traverse the membrane as a helical segment. At 521-531 (RWKCRRLRLRE) the chain is on the cytoplasmic side. A helical membrane pass occupies residues 532 to 552 (AWLLGTAQGVAMLFILMALLC). The Extracellular segment spans residues 553-1317 (CGLCNGALTE…EVSVELTVPI (765 aa)). 7 Ig-like C2-type domains span residues 570–658 (TPKP…ALEL), 659–753 (VGTD…ELVI), 758–850 (PKPF…LVVT), 854–938 (PKPT…SSLS), 946–1041 (TDTF…ELIV), 1046–1131 (PKPS…NHSN), and 1142–1223 (PKPS…EPSD). Cys-780 and Cys-830 are disulfide-bonded. Residue Asn-871 is glycosylated (N-linked (GlcNAc...) asparagine). Cys-876 and Cys-923 are joined by a disulfide. Asn-967 and Asn-1063 each carry an N-linked (GlcNAc...) asparagine glycan. 2 cysteine pairs are disulfide-bonded: Cys-1068–Cys-1115 and Cys-1164–Cys-1207. Positions 1290-1310 (NQEGEPGTTTNSPSSASQEVS) are disordered. Polar residues predominate over residues 1296–1309 (GTTTNSPSSASQEV).

Interacts with INHA; the interaction is not confirmed by standard receptor binding assays. Interacts with ACVR1B; the interaction appears to be ligand-dependent as it is diminished by inhibin B and activin A. Interacts with ACVR2A, ACVR2B, ACVRL1 and BMPR1B. Interacts with HECTD1.

It is found in the membrane. The protein resides in the secreted. Functionally, seems to be a coreceptor in inhibin signaling, but seems not to be a high-affinity inhibin receptor. Antagonizes activin A signaling in the presence or absence of inhibin B. Necessary to mediate a specific antagonistic effect of inhibin B on activin-stimulated transcription. This Mus musculus (Mouse) protein is Immunoglobulin superfamily member 1 (Igsf1).